Consider the following 463-residue polypeptide: Argininosuccinate lyase (463 aa).

Belongs to the lyase 1 family. Argininosuccinate lyase subfamily.

The protein resides in the cytoplasm. The enzyme catalyses 2-(N(omega)-L-arginino)succinate = fumarate + L-arginine. It functions in the pathway amino-acid biosynthesis; L-arginine biosynthesis; L-arginine from L-ornithine and carbamoyl phosphate: step 3/3. This chain is Argininosuccinate lyase, found in Streptococcus pneumoniae serotype 2 (strain D39 / NCTC 7466).